The sequence spans 126 residues: LWamide neuropeptides (126 aa).

The propeptide at 1-2 (KR) is 1. A disordered region spans residues 1–126 (KRQQPGLWGR…KSAIPKAKPQ (126 aa)). Tryptophan 8 carries the tryptophan amide modification. Residues 11–15 (SADPQ) constitute a propeptide, 2. Tryptophan amide is present on residues tryptophan 20 and tryptophan 29. Residues 32–36 (SADPQ) constitute a propeptide, 2. Tryptophan amide is present on residues tryptophan 41 and tryptophan 50. Residues 53 to 57 (SADPQ) constitute a propeptide, 2. A tryptophan amide mark is found at tryptophan 62 and tryptophan 71. Residues 74 to 78 (SADPQ) constitute a propeptide, 2. Tryptophan 83 carries the tryptophan amide modification. A propeptide spans 86 to 93 (SAGSGKRQ) (3). Tryptophan 99 is modified (tryptophan amide). Residues 102–126 (SAEPPQYKELEDLKQKSAIPKAKPQ) constitute a propeptide, 4. The span at 107–116 (QYKELEDLKQ) shows a compositional bias: basic and acidic residues.

The protein belongs to the LWamide neuropeptide family.

The protein resides in the secreted. Functionally, metamorphosin A may be part of an internal signaling system involved in control of metamorphosis. This Anemonia sulcata (Mediterranean snakelocks sea anemone) protein is LWamide neuropeptides.